Consider the following 266-residue polypeptide: Glucosamine-6-phosphate deaminase (266 aa).

Catalysis depends on D72, which acts as the Proton acceptor; for enolization step. D141 (for ring-opening step) is an active-site residue. Catalysis depends on H143, which acts as the Proton acceptor; for ring-opening step. E148 functions as the For ring-opening step in the catalytic mechanism.

This sequence belongs to the glucosamine/galactosamine-6-phosphate isomerase family. NagB subfamily. In terms of assembly, homohexamer.

The catalysed reaction is alpha-D-glucosamine 6-phosphate + H2O = beta-D-fructose 6-phosphate + NH4(+). The protein operates within amino-sugar metabolism; N-acetylneuraminate degradation; D-fructose 6-phosphate from N-acetylneuraminate: step 5/5. Its activity is regulated as follows. Allosterically activated by N-acetylglucosamine 6-phosphate (GlcNAc6P). Its function is as follows. Catalyzes the reversible isomerization-deamination of glucosamine 6-phosphate (GlcN6P) to form fructose 6-phosphate (Fru6P) and ammonium ion. This is Glucosamine-6-phosphate deaminase from Cronobacter sakazakii (strain ATCC BAA-894) (Enterobacter sakazakii).